We begin with the raw amino-acid sequence, 122 residues long: Acidic phospholipase A2 5 (122 aa).

Cystine bridges form between Cys-26-Cys-115, Cys-28-Cys-44, Cys-43-Cys-95, Cys-49-Cys-122, Cys-50-Cys-88, Cys-57-Cys-81, and Cys-75-Cys-86. Ca(2+) is bound by residues Phe-27, Gly-29, and Gly-31. Residue His-47 is part of the active site. Residue Asp-48 coordinates Ca(2+). The active site involves Asp-89.

This sequence belongs to the phospholipase A2 family. Group II subfamily. D49 sub-subfamily. In terms of assembly, monomer (predominant). Non-covalently linked homodimers are also observed. Requires Ca(2+) as cofactor. Expressed by the venom gland.

Its subcellular location is the secreted. It catalyses the reaction a 1,2-diacyl-sn-glycero-3-phosphocholine + H2O = a 1-acyl-sn-glycero-3-phosphocholine + a fatty acid + H(+). Its activity is regulated as follows. Preincubation with heparin slightly increase the enzymatic activity. Its function is as follows. Snake venom phospholipase A2 (PLA2) that inhibits platelet aggregation induced by ADP, arachidonic acid and PAF. Acts in a enzymatic independent manner on a proteinase-activated receptor (PAR1, F2R) to evoke calcium release through the inositol 1,4,5-trisphosphate receptor (ITPR1, IP3R) and induces mouse aorta contraction. PAR1, phospholipase C and IP3R inhibitors suppress PA2-induced aorta contraction. PLA2 catalyzes the calcium-dependent hydrolysis of the 2-acyl groups in 3-sn-phosphoglycerides. The protein is Acidic phospholipase A2 5 of Trimeresurus stejnegeri (Chinese green tree viper).